The chain runs to 273 residues: Ribosomal RNA small subunit methyltransferase A (273 aa).

S-adenosyl-L-methionine-binding residues include asparagine 18, leucine 20, glycine 45, glutamate 66, aspartate 91, and asparagine 113.

The protein belongs to the class I-like SAM-binding methyltransferase superfamily. rRNA adenine N(6)-methyltransferase family. RsmA subfamily.

The protein localises to the cytoplasm. The catalysed reaction is adenosine(1518)/adenosine(1519) in 16S rRNA + 4 S-adenosyl-L-methionine = N(6)-dimethyladenosine(1518)/N(6)-dimethyladenosine(1519) in 16S rRNA + 4 S-adenosyl-L-homocysteine + 4 H(+). In terms of biological role, specifically dimethylates two adjacent adenosines (A1518 and A1519) in the loop of a conserved hairpin near the 3'-end of 16S rRNA in the 30S particle. May play a critical role in biogenesis of 30S subunits. This is Ribosomal RNA small subunit methyltransferase A from Klebsiella pneumoniae (strain 342).